The chain runs to 354 residues: Probable RNA methyltransferase AZOSEA28700 (354 aa).

Glu88 acts as the Proton acceptor in catalysis. The region spanning 91–317 (LLPRDGLCVS…TKLRHSAGQD (227 aa)) is the Radical SAM core domain. A disulfide bond links Cys98 and Cys322. [4Fe-4S] cluster is bound by residues Cys105, Cys109, and Cys112. Residues 150–151 (GE), Ser180, 203–205 (SLH), and Asn279 contribute to the S-adenosyl-L-methionine site. Cys322 acts as the S-methylcysteine intermediate in catalysis.

This sequence belongs to the radical SAM superfamily. RlmN family. [4Fe-4S] cluster is required as a cofactor.

It is found in the cytoplasm. In Aromatoleum aromaticum (strain DSM 19018 / LMG 30748 / EbN1) (Azoarcus sp. (strain EbN1)), this protein is Probable RNA methyltransferase AZOSEA28700.